We begin with the raw amino-acid sequence, 174 residues long: NADH-quinone oxidoreductase subunit C (174 aa).

This sequence belongs to the complex I 30 kDa subunit family. NDH-1 is composed of 14 different subunits. Subunits NuoB, C, D, E, F, and G constitute the peripheral sector of the complex.

The protein localises to the cell membrane. It carries out the reaction a quinone + NADH + 5 H(+)(in) = a quinol + NAD(+) + 4 H(+)(out). NDH-1 shuttles electrons from NADH, via FMN and iron-sulfur (Fe-S) centers, to quinones in the respiratory chain. The immediate electron acceptor for the enzyme in this species is believed to be ubiquinone. Couples the redox reaction to proton translocation (for every two electrons transferred, four hydrogen ions are translocated across the cytoplasmic membrane), and thus conserves the redox energy in a proton gradient. The chain is NADH-quinone oxidoreductase subunit C from Roseiflexus sp. (strain RS-1).